The following is a 106-amino-acid chain: MKSCCGENAISDIESSAGLLMTISLAKSFSFAIAVLVPKAEVVFDRLKKDIVPHFSSSYVFLYFIVICRLRFMIFDQGGCAGMIGMVSLPNSYKSVSVQVKWLYSA.

2 helical membrane-spanning segments follow: residues 17-37 (AGLLMTISLAKSFSFAIAVLV) and 55-75 (FSSSYVFLYFIVICRLRFMIF).

It is found in the membrane. This is an uncharacterized protein from Saccharomyces cerevisiae (strain ATCC 204508 / S288c) (Baker's yeast).